The following is a 277-amino-acid chain: NADPH-dependent 7-cyano-7-deazaguanine reductase (277 aa).

83–85 (VES) is a binding site for substrate. 85 to 86 (SK) contacts NADPH. The Thioimide intermediate role is filled by Cys184. Catalysis depends on Asp191, which acts as the Proton donor. 223 to 224 (HE) contacts substrate. Residue 252–253 (RG) participates in NADPH binding.

Belongs to the GTP cyclohydrolase I family. QueF type 2 subfamily. As to quaternary structure, homodimer.

It is found in the cytoplasm. The enzyme catalyses 7-aminomethyl-7-carbaguanine + 2 NADP(+) = 7-cyano-7-deazaguanine + 2 NADPH + 3 H(+). Its pathway is tRNA modification; tRNA-queuosine biosynthesis. In terms of biological role, catalyzes the NADPH-dependent reduction of 7-cyano-7-deazaguanine (preQ0) to 7-aminomethyl-7-deazaguanine (preQ1). The sequence is that of NADPH-dependent 7-cyano-7-deazaguanine reductase from Cupriavidus metallidurans (strain ATCC 43123 / DSM 2839 / NBRC 102507 / CH34) (Ralstonia metallidurans).